Reading from the N-terminus, the 113-residue chain is Transcription initiation factor IIA subunit 2 (113 aa).

It belongs to the TFIIA subunit 2 family. In terms of assembly, TFIIA is a heterodimer of the large unprocessed subunit 1 and a small subunit gamma. It was originally believed to be a heterotrimer of an alpha, a beta and a gamma subunit.

It is found in the nucleus. In terms of biological role, TFIIA is a component of the transcription machinery of RNA polymerase II and plays an important role in transcriptional activation. TFIIA in a complex with TBP mediates transcriptional activity. The protein is Transcription initiation factor IIA subunit 2 of Caenorhabditis elegans.